A 234-amino-acid chain; its full sequence is Biosynthetic peptidoglycan transglycosylase (234 aa).

A helical transmembrane segment spans residues 8-28; that stretch reads VIGCFAAGVVALNLYFFAAIA.

This sequence belongs to the glycosyltransferase 51 family.

Its subcellular location is the cell inner membrane. The enzyme catalyses [GlcNAc-(1-&gt;4)-Mur2Ac(oyl-L-Ala-gamma-D-Glu-L-Lys-D-Ala-D-Ala)](n)-di-trans,octa-cis-undecaprenyl diphosphate + beta-D-GlcNAc-(1-&gt;4)-Mur2Ac(oyl-L-Ala-gamma-D-Glu-L-Lys-D-Ala-D-Ala)-di-trans,octa-cis-undecaprenyl diphosphate = [GlcNAc-(1-&gt;4)-Mur2Ac(oyl-L-Ala-gamma-D-Glu-L-Lys-D-Ala-D-Ala)](n+1)-di-trans,octa-cis-undecaprenyl diphosphate + di-trans,octa-cis-undecaprenyl diphosphate + H(+). The protein operates within cell wall biogenesis; peptidoglycan biosynthesis. Its function is as follows. Peptidoglycan polymerase that catalyzes glycan chain elongation from lipid-linked precursors. This chain is Biosynthetic peptidoglycan transglycosylase, found in Ralstonia nicotianae (strain ATCC BAA-1114 / GMI1000) (Ralstonia solanacearum).